The chain runs to 206 residues: Ras-related protein Rab-18 (206 aa).

The residue at position 1 (M1) is an N-acetylmethionine. Residues S17, G20, K21, S22, S23, D34, P35, T40, G66, K123, and D125 each coordinate GTP. Residue S22 coordinates Mg(2+). Short sequence motifs (switch) lie at residues 31 to 45 and 63 to 80; these read DTFDPELAATIGVDF and DTAGQERFRTLTPSYYRG. A Mg(2+)-binding site is contributed by T40. At S144 the chain carries Phosphoserine. Position 152 (A152) interacts with GTP. C199 carries the S-palmitoyl cysteine lipid modification. C203 bears the Cysteine methyl ester mark. Residue C203 is the site of S-geranylgeranyl cysteine attachment. Positions 204–206 are cleaved as a propeptide — removed in mature form; that stretch reads SVL.

The protein belongs to the small GTPase superfamily. Rab family. In terms of assembly, interacts (in GTP-bound form) with ZFYVE1. Interacts with ZW10 and this interaction is enhanced in the presence of ZFYVE1. Interacts with BSCL2. Mg(2+) serves as cofactor. Expression is high in the brain, moderate in the pituitary, and low in the liver. Detected in all tissues. Highly enriched on apical endocytic structures in polarized epithelial cells of kidney proximal tubules. Detected on both the apical and basolateral domains in epithelial cells of the intestine.

It localises to the endoplasmic reticulum membrane. The protein resides in the golgi apparatus. Its subcellular location is the cis-Golgi network membrane. The protein localises to the lipid droplet. It is found in the apical cell membrane. It catalyses the reaction GTP + H2O = GDP + phosphate + H(+). Its activity is regulated as follows. Regulated by guanine nucleotide exchange factor (GEF) RAB3GAP1-RAB3GAP2 complex at the cis-Golgi membrane which promotes the exchange of bound GDP for free GTP. Regulated by GTPase activating protein (GAP) TBC1D20 at the ER membrane which increases the GTP hydrolysis activity. Inhibited by GDP dissociation inhibitors (GDIs) which prevent Rab-GDP dissociation. Functionally, the small GTPases Rab are key regulators of intracellular membrane trafficking, from the formation of transport vesicles to their fusion with membranes. Rabs cycle between an inactive GDP-bound form and an active GTP-bound form that is able to recruit to membranes different sets of downstream effectors directly responsible for vesicle formation, movement, tethering and fusion. RAB18 is required for the localization of ZFYVE1 to lipid droplets and for its function in mediating the formation of endoplasmic reticulum-lipid droplets (ER-LD) contacts. Also required for maintaining endoplasmic reticulum structure. Plays a role in apical endocytosis/recycling. Plays a key role in eye and brain development and neurodegeneration. This is Ras-related protein Rab-18 from Mus musculus (Mouse).